The chain runs to 291 residues: MNRIQQTFQTSSAPFWYAQLELGFCYENSRTIMSHRKHYGPVRVQKMLWPEKTGVCHAIIVHPPAGIAGGDHLTFQIETERQAHAVITTPGAGKWYRTNGKQAFQHIYLNVKDDSILEWMPQETMLFDGALAHSETDIHLEQTASFIGWDMLVLGRQARAENFVQGGYHNQFKLWRKNKLLVADTLYFEGGDRWLSSCLGMNNQAVMASFWAVPPEKFRSSFYLEQHIELIRELIMRMDVPVTLTLLEDVLCARFLGNDVRRCHDAFAAIRAKLRRYWFDLDEEFPRIWKT.

This sequence belongs to the UreD family. In terms of assembly, ureD, UreF and UreG form a complex that acts as a GTP-hydrolysis-dependent molecular chaperone, activating the urease apoprotein by helping to assemble the nickel containing metallocenter of UreC. The UreE protein probably delivers the nickel.

The protein resides in the cytoplasm. Its function is as follows. Required for maturation of urease via the functional incorporation of the urease nickel metallocenter. The protein is Urease accessory protein UreD of Acinetobacter baumannii (strain SDF).